Reading from the N-terminus, the 508-residue chain is Cytochrome P450 monooxygenase tenA (508 aa).

The chain crosses the membrane as a helical span at residues Val8 to Leu24. Cys456 is a heme binding site.

It belongs to the cytochrome P450 family. The cofactor is heme.

It is found in the membrane. It participates in secondary metabolite biosynthesis. Its function is as follows. Cytochrome P450 monooxygenase; part of the gene cluster that mediates the biosynthesis of tenellin-type 2-pyridones, iron-chelating compounds involved in iron stress tolerance, competition with the natural competitor fungus Metarhizium robertsii and insect hosts infection. TenA catalyzes an oxidative ring expansion of pretenellin A and 14-hydropretellenin A to form the 2-pyridone core, leading to the production of pretenellin B and pyridovericin, respectively. The pathway begins with the assembly of the polyketide-amino acid backbone by the hybrid PKS-NRPS tenS with the help of the enoyl reductase tenC. These enzymes catalyze the synthesis of the pyrrolidine-2-dione intermediates pretellinin A, 11-hydropretellenin A, 12-hydropretellenin A, 13-hydropretellenin A, 14-hydropretellenin A, 12-oxopretellenin A and prototellinin D. The cytochrome P450 monooxygenase tenA then catalyzes an oxidative ring expansion of pretenellin A and 14-hydropretellenin A to form the 2-pyridone core, leading to pretenellin B and pyridovericin, respectively. The cytochrome P450 monooxygenase tenB is then required for the selective N-hydroxylation of the 2-pyridone nitrogen of yield tellinin and 15-hydroxytellenin (15-HT), respectively. The UDP-glucosyltransferase GT1 and the methyltransferase MT1, located outside the tenS gene cluster, contribute to the stepwise glycosylation and methylation of 15-HT to obtain the glycoside pyridovericin-N-O-(4-O-methyl-beta-D-glucopyranoside) (PMGP). Additional related compounds such as 1-O-methyl-15-HT, (8Z)-1-O-methyl-15-HT, and O-methyltenellin A are also produced but the enzymes involved in their biosynthesis have still to be determined. The chain is Cytochrome P450 monooxygenase tenA from Beauveria bassiana (White muscardine disease fungus).